A 224-amino-acid polypeptide reads, in one-letter code: UPF0758 protein Psyr_0222 (224 aa).

The MPN domain maps to A102–M224. Zn(2+) is bound by residues H173, H175, and D186. Residues H173–D186 carry the JAMM motif motif.

The protein belongs to the UPF0758 family.

The protein is UPF0758 protein Psyr_0222 of Pseudomonas syringae pv. syringae (strain B728a).